Consider the following 152-residue polypeptide: 3-hydroxyacyl-[acyl-carrier-protein] dehydratase FabZ (152 aa).

His57 is an active-site residue.

Belongs to the thioester dehydratase family. FabZ subfamily.

Its subcellular location is the cytoplasm. It carries out the reaction a (3R)-hydroxyacyl-[ACP] = a (2E)-enoyl-[ACP] + H2O. In terms of biological role, involved in unsaturated fatty acids biosynthesis. Catalyzes the dehydration of short chain beta-hydroxyacyl-ACPs and long chain saturated and unsaturated beta-hydroxyacyl-ACPs. This chain is 3-hydroxyacyl-[acyl-carrier-protein] dehydratase FabZ, found in Xanthomonas axonopodis pv. citri (strain 306).